The following is a 968-amino-acid chain: Bifunctional glyoxylate cycle protein (968 aa).

The isocitrate lyase stretch occupies residues Met-1–Leu-443. Residues Ser-444 to Tyr-968 are malate synthase. Residue Arg-601 is the Proton acceptor of the active site. Residue Asp-881 is the Proton donor of the active site.

This sequence in the N-terminal section; belongs to the isocitrate lyase/PEP mutase superfamily. Isocitrate lyase family. In the C-terminal section; belongs to the malate synthase family. As to expression, intestinal and body wall muscle cells.

It catalyses the reaction D-threo-isocitrate = glyoxylate + succinate. It carries out the reaction glyoxylate + acetyl-CoA + H2O = (S)-malate + CoA + H(+). It functions in the pathway carbohydrate metabolism; glyoxylate cycle; (S)-malate from isocitrate: step 1/2. Its pathway is carbohydrate metabolism; glyoxylate cycle; (S)-malate from isocitrate: step 2/2. This chain is Bifunctional glyoxylate cycle protein (icl-1), found in Caenorhabditis elegans.